A 692-amino-acid chain; its full sequence is Elongation factor G (692 aa).

Positions E8–T282 constitute a tr-type G domain. Residues A17–T24, D81–H85, and N135–D138 contribute to the GTP site. Residues S213, S302, S569, and S680 each carry the phosphoserine modification.

Belongs to the TRAFAC class translation factor GTPase superfamily. Classic translation factor GTPase family. EF-G/EF-2 subfamily. Post-translationally, phosphorylated on threonine residue(s). Phosphorylated by PrkC and dephosphorylated by PrpC, in vitro.

Its subcellular location is the cytoplasm. Functionally, catalyzes the GTP-dependent ribosomal translocation step during translation elongation. During this step, the ribosome changes from the pre-translocational (PRE) to the post-translocational (POST) state as the newly formed A-site-bound peptidyl-tRNA and P-site-bound deacylated tRNA move to the P and E sites, respectively. Catalyzes the coordinated movement of the two tRNA molecules, the mRNA and conformational changes in the ribosome. The polypeptide is Elongation factor G (fusA) (Bacillus subtilis (strain 168)).